A 932-amino-acid chain; its full sequence is MGSNNGRAMKLALVPLPKGSVLLPGVTLRIPVSNRPDLANLLSALLDQTNLGKRDGNTITFGCVPLRSPLLSNDGQQLIDDGSVDGAKKEEFDAIDAGQARKEDLFRYGTVGKVIGVQRRAYAEPFLVVQGVQRFTIKHILRERPFFEGEVVLHNERDAISSDAETVELFQQLRQLSRELITLLRLSSLLPSTGTRLSPLVARKFEVYIAKTDLSQAGNLADFMADVADPTFEEKLRVLASFALRTRLERVVELLARQVQGIKNSVKVTTISTSSFPSNSPFDISQIDPRDRELLARRVMAGLTGLTPPGAAGGRNNEDEKETNEVDELQKRLQEAELSPEARKVADKELRRLRKMNPANAEYGVCRTYLENIADIPWTKVTEDKLGPETLKRARNQLDEDHYGLETIKKRLLEYLAVLRLKQSTNQDVERQIAALTKELDAANEVLAEKDVPALSESDRVSLEAKLNLLQSRRLADKSPILLLVGPPGTGKTSLARSVATSLGRKFHRISLGGVRDEAEIRGHRRTYVAAMPGLIVNGLKKVGVANPVFLLDEIDKVGGANFQGDPSAAMLEVLDPEQNSTFVDHYINIPIDLSKVLFIATANSLDTIPAPLLDRMETITLSGYTTVEKRHIAKRHLIPKQIRANGLAEGQVVLSDEVVDKVITSYTRESGVRNLERELGSICRHKAVQYADAVDNGRLDTYNPVVALGDLEDILGIERFDEEIAEKHGRPGVVTGLVAYSTGGQGSILFIEVADMPGNGRVQLTGKLGDVLKESVEVALTWVKAHSFELGLTHDPNEDIMKNRSLHVHCPAGAIPKDGPSAGLAHTIGLISLFTGKAVPPQIAMTGEVSLRGRVMPVGGIKEKLIGAHRAGVKTVLLPEQNRKDVKDVPQEVHDGLQIVYVRHIWEAIRQVWPGAHWPGQHHINFVESRL.

The Lon N-terminal domain maps to 11 to 259 (LALVPLPKGS…RVVELLARQV (249 aa)). The segment at 304-340 (TGLTPPGAAGGRNNEDEKETNEVDELQKRLQEAELSP) is disordered. Over residues 328–340 (ELQKRLQEAELSP) the composition is skewed to basic and acidic residues. Position 486–493 (486–493 (GPPGTGKT)) interacts with ATP. Positions 729 to 916 (HGRPGVVTGL…WEAIRQVWPG (188 aa)) constitute a Lon proteolytic domain. Residues serine 822 and lysine 865 contribute to the active site. The Microbody targeting signal motif lies at 930–932 (SRL).

Belongs to the peptidase S16 family.

Its subcellular location is the peroxisome matrix. It carries out the reaction Hydrolysis of proteins in presence of ATP.. Functionally, ATP-dependent serine protease that mediates the selective degradation of misfolded and unassembled polypeptides in the peroxisomal matrix. Necessary for type 2 peroxisome targeting signal (PTS2)-containing protein processing and facilitates peroxisome matrix protein import. The sequence is that of Lon protease homolog 2, peroxisomal from Aspergillus fumigatus (strain ATCC MYA-4609 / CBS 101355 / FGSC A1100 / Af293) (Neosartorya fumigata).